The sequence spans 580 residues: Protein O-linked-mannose beta-1,4-N-acetylglucosaminyltransferase 2 (580 aa).

The Cytoplasmic segment spans residues 1 to 4 (MHLS). Residues 5-25 (AVFNALLVSVLAAVLWKHVRL) traverse the membrane as a helical; Signal-anchor for type II membrane protein segment. The Lumenal portion of the chain corresponds to 26–580 (REHAATLEEE…PFADVLVCST (555 aa)). Residues Asn99 and Asn276 are each glycosylated (N-linked (GlcNAc...) asparagine). Residues 488-580 (ARCQASVQGA…PFADVLVCST (93 aa)) form the Fibronectin type-III domain.

This sequence belongs to the glycosyltransferase 61 family. As to expression, mainly expressed in the central nervous system.

It localises to the endoplasmic reticulum membrane. The catalysed reaction is 3-O-(alpha-D-mannosyl)-L-threonyl-[protein] + UDP-N-acetyl-alpha-D-glucosamine = 3-O-(N-acetyl-beta-D-glucosaminyl-(1-&gt;4)-alpha-D-mannosyl)-L-threonyl-[protein] + UDP + H(+). Its pathway is protein modification; protein glycosylation. In terms of biological role, O-linked mannose beta-1,4-N-acetylglucosaminyltransferase that transfers UDP-N-acetyl-D-glucosamine to the 4-position of the mannose to generate N-acetyl-D-glucosamine-beta-1,4-O-D-mannosylprotein. Involved in the biosynthesis of the phosphorylated O-mannosyl trisaccharide (N-acetylgalactosamine-beta-3-N-acetylglucosamine-beta-4-(phosphate-6-)mannose), a carbohydrate structure present in alpha-dystroglycan (DAG1), which is required for binding laminin G-like domain-containing extracellular proteins with high affinity. In Mus musculus (Mouse), this protein is Protein O-linked-mannose beta-1,4-N-acetylglucosaminyltransferase 2 (Pomgnt2).